The primary structure comprises 563 residues: MWGALRSALRPCCRAAVPPQRAYHGDSVARLGTQPDSASSTYQENYEQMKALVSQLHERAQYVRLGGSEKARARHTSRGKLLPRDRIDNLIDPGSPFLEFSQFAGYQLYGDEEVPAGGIITGIGRVSGVECMIVANDATVKGGTYYPVTVKKHVRAQEIALQNRLPCIYLVDSGGANLPRQADTFPDRDHFGRIFYNQAIMSSKNITQIAVVMGSCTAGGAYVPAMADENIIVQKQGTIFLAGPPLVKAATGEEVSAEDLGGADLHCRKSGVTDHYALDDHHALHLTRKVVRSLNYQKKMDVTIEPSEEPLFPADELYGIVGANLKRSFDVREVIARIVDGSRFNEFKALYGDTLVTGFARIFGYPVGIIGNNGVLFSESAKKGAHFVQLCCQRNIPLLFLQNITGFMVGRDYEAEGIAKDGAKMVAAVACAKVPKITVIIGGSYGAGNYGMCGRAYSPRFLYMWPNARISVMGGEQAATVLATVARDQKAREGKQFSSAEEAALKEPIIKRFEEEGNPYYSSARLWDDGIIDPVDTRLVLGLSLSAALNAPIQRTDFGIFRM.

The transit peptide at 1-22 directs the protein to the mitochondrion; it reads MWGALRSALRPCCRAAVPPQRA. In terms of domain architecture, CoA carboxyltransferase N-terminal spans 49-306; sequence MKALVSQLHE…QKKMDVTIEP (258 aa). The tract at residues 49–555 is carboxyltransferase; sequence MKALVSQLHE…SAALNAPIQR (507 aa). At lysine 70 the chain carries N6-acetyllysine; alternate. Lysine 70 is modified (N6-succinyllysine; alternate). An N6-succinyllysine modification is found at lysine 141. The 247-residue stretch at 309 to 555 folds into the CoA carboxyltransferase C-terminal domain; the sequence is EPLFPADELY…SAALNAPIQR (247 aa). The tract at residues 343–372 is acyl-CoA binding; the sequence is RFNEFKALYGDTLVTGFARIFGYPVGIIGN. N6-succinyllysine is present on lysine 433. Lysine 495 carries the N6-acetyllysine; alternate modification. Lysine 495 is subject to N6-succinyllysine; alternate. Lysine 511 carries the post-translational modification N6-acetyllysine.

Belongs to the AccD/PCCB family. Probably a dodecamer composed of six biotin-containing alpha subunits (MCCC1) and six beta (MCCC2) subunits.

Its subcellular location is the mitochondrion matrix. It carries out the reaction 3-methylbut-2-enoyl-CoA + hydrogencarbonate + ATP = 3-methyl-(2E)-glutaconyl-CoA + ADP + phosphate + H(+). It participates in amino-acid degradation; L-leucine degradation; (S)-3-hydroxy-3-methylglutaryl-CoA from 3-isovaleryl-CoA: step 2/3. Functionally, carboxyltransferase subunit of the 3-methylcrotonyl-CoA carboxylase, an enzyme that catalyzes the conversion of 3-methylcrotonyl-CoA to 3-methylglutaconyl-CoA, a critical step for leucine and isovaleric acid catabolism. The polypeptide is Methylcrotonoyl-CoA carboxylase beta chain, mitochondrial (Mccc2) (Mus musculus (Mouse)).